A 317-amino-acid chain; its full sequence is tRNA uridine(34) hydroxylase (317 aa).

Residues 123-217 (EDDDTIVIDA…YGKDPETKGE (95 aa)) enclose the Rhodanese domain. Catalysis depends on cysteine 177, which acts as the Cysteine persulfide intermediate.

It belongs to the TrhO family.

It carries out the reaction uridine(34) in tRNA + AH2 + O2 = 5-hydroxyuridine(34) in tRNA + A + H2O. Functionally, catalyzes oxygen-dependent 5-hydroxyuridine (ho5U) modification at position 34 in tRNAs. The chain is tRNA uridine(34) hydroxylase from Staphylococcus carnosus (strain TM300).